Consider the following 189-residue polypeptide: 3-hydroxyanthranilate 3,4-dioxygenase (189 aa).

Arg-50 lines the O2 pocket. Positions 54, 60, and 102 each coordinate Fe cation. Glu-60 lines the substrate pocket. Substrate contacts are provided by Arg-106 and Glu-116. A divalent metal cation is bound by residues Cys-131, Cys-136, Cys-170, and Cys-173.

The protein belongs to the 3-HAO family. It depends on Fe(2+) as a cofactor.

It localises to the cytoplasm. The catalysed reaction is 3-hydroxyanthranilate + O2 = (2Z,4Z)-2-amino-3-carboxymuconate 6-semialdehyde. It participates in cofactor biosynthesis; NAD(+) biosynthesis; quinolinate from L-kynurenine: step 3/3. Its function is as follows. Catalyzes the oxidative ring opening of 3-hydroxyanthranilate to 2-amino-3-carboxymuconate semialdehyde, which spontaneously cyclizes to quinolinate. The polypeptide is 3-hydroxyanthranilate 3,4-dioxygenase (bna1) (Aspergillus niger (strain ATCC MYA-4892 / CBS 513.88 / FGSC A1513)).